The primary structure comprises 201 residues: Cytochrome c oxidase assembly protein CtaG (201 aa).

The Cytoplasmic segment spans residues 1–13 (MTDQGENEKKQRR). A helical; Signal-anchor for type II membrane protein transmembrane segment spans residues 14-36 (SNATIAVACLSFFVCMIGAAYAS). The Periplasmic portion of the chain corresponds to 37 to 201 (VPLYRIFCQV…KAVGSTRNGG (165 aa)).

The protein belongs to the COX11/CtaG family.

It localises to the cell inner membrane. In terms of biological role, exerts its effect at some terminal stage of cytochrome c oxidase synthesis, probably by being involved in the insertion of the copper B into subunit I. This chain is Cytochrome c oxidase assembly protein CtaG, found in Brucella suis (strain ATCC 23445 / NCTC 10510).